The primary structure comprises 126 residues: DNA-directed RNA polymerase I subunit RPA12 (126 aa).

Zn(2+) is bound by residues Cys20, Cys23, Cys38, Cys41, Cys87, and Cys90. A C4-type zinc finger spans residues Cys20 to Cys41. The TFIIS-type zinc-finger motif lies at Val83 to Lys123. The Hairpin signature appears at Asp106–Glu107. The Zn(2+) site is built by Cys115 and Cys118.

The protein belongs to the archaeal RpoM/eukaryotic RPA12/RPB9/RPC11 RNA polymerase family. Component of the RNA polymerase I (Pol I) complex consisting of 13 subunits: a ten-subunit catalytic core composed of POLR1A/RPA1, POLR1B/RPA2, POLR1C/RPAC1, POLR1D/RPAC2, POLR1H/RPA12, POLR2E/RPABC1, POLR2F/RPABC2, POLR2H/RPABC3, POLR2K/RPABC4 and POLR2L/RPABC5; a mobile stalk subunit POLR1F/RPA43 protruding from the core and additional subunits homologous to general transcription factors POLR1E/RPA49 and POLR1G/RPA34. Part of Pol I pre-initiation complex (PIC), in which Pol I core assembles with RRN3 and promoter-bound UTBF and SL1/TIF-IB complex.

The protein localises to the nucleus. It is found in the nucleolus. In terms of biological role, core component of RNA polymerase I (Pol I), a DNA-dependent RNA polymerase which synthesizes ribosomal RNA precursors using the four ribonucleoside triphosphates as substrates. Can mediate Pol I proofreading of the nascent RNA transcript. Anchors into the Pol I active site to monitor transcription fidelity and cleave mis-incorporated 5'-ribonucleotides. This is DNA-directed RNA polymerase I subunit RPA12 from Homo sapiens (Human).